Reading from the N-terminus, the 145-residue chain is Superoxide dismutase [Mn/Fe] (145 aa).

Residues His10 and His64 each coordinate Fe(3+). Residues His10 and His64 each coordinate Mn(2+).

This sequence belongs to the iron/manganese superoxide dismutase family. Mn(2+) serves as cofactor. It depends on Fe(3+) as a cofactor.

It carries out the reaction 2 superoxide + 2 H(+) = H2O2 + O2. Functionally, destroys superoxide anion radicals which are normally produced within the cells and which are toxic to biological systems. Catalyzes the dismutation of superoxide anion radicals into O2 and H2O2 by successive reduction and oxidation of the transition metal ion at the active site. The sequence is that of Superoxide dismutase [Mn/Fe] (sodA) from Streptococcus salivarius.